Here is a 62-residue protein sequence, read N- to C-terminus: Snaclec aspercetin subunit alpha (62 aa).

A disulfide bridge connects residues cysteine 2 and cysteine 13. The region spanning tyrosine 9 to glycine 62 is the C-type lectin domain.

This sequence belongs to the snaclec family. As to quaternary structure, heterodimer; disulfide-linked. Expressed by the venom gland.

The protein localises to the secreted. In terms of biological role, snaclec that binds to von Willebrand factor (VWF) and induces its interaction with GPIbalpha (GP1BA) (via the vWF A1 domain), resulting in platelet aggregation. Intravenous injection in mice induces a dose-dependent drop in platelet count (thrombocytopenia). Pretreatment by intravenous injection by this protein in mice potentiates the hemorrhagic lesion in the skin provoked by the metalloproteinase BaP1 intradermally injected. This result is not observed when both BaP1 and this protein are injected simultaneously. This chain is Snaclec aspercetin subunit alpha, found in Bothrops asper (Terciopelo).